A 1097-amino-acid chain; its full sequence is DNA-directed RNA polymerase subunit beta (1097 aa).

The tract at residues 1072–1097 is disordered; it reads QDINPRRNTPSRPTYESLGTSEYEED. A compositionally biased stretch (polar residues) spans 1077–1091; it reads RRNTPSRPTYESLGT.

It belongs to the RNA polymerase beta chain family. In cyanobacteria the RNAP catalytic core is composed of 2 alpha, 1 beta, 1 beta', 1 gamma and 1 omega subunit. When a sigma factor is associated with the core the holoenzyme is formed, which can initiate transcription.

The enzyme catalyses RNA(n) + a ribonucleoside 5'-triphosphate = RNA(n+1) + diphosphate. Functionally, DNA-dependent RNA polymerase catalyzes the transcription of DNA into RNA using the four ribonucleoside triphosphates as substrates. This Prochlorococcus marinus (strain MIT 9215) protein is DNA-directed RNA polymerase subunit beta.